Reading from the N-terminus, the 294-residue chain is Ribosomal protein L11 methyltransferase (294 aa).

Residues T144, G165, D187, and N229 each coordinate S-adenosyl-L-methionine.

It belongs to the methyltransferase superfamily. PrmA family.

The protein localises to the cytoplasm. The enzyme catalyses L-lysyl-[protein] + 3 S-adenosyl-L-methionine = N(6),N(6),N(6)-trimethyl-L-lysyl-[protein] + 3 S-adenosyl-L-homocysteine + 3 H(+). Functionally, methylates ribosomal protein L11. This chain is Ribosomal protein L11 methyltransferase, found in Pseudomonas aeruginosa (strain LESB58).